The following is a 143-amino-acid chain: uncharacterized protein (143 aa).

Residues methionine 1–alanine 143 form a disordered region. Composition is skewed to basic and acidic residues over residues isoleucine 34–aspartate 46 and glutamate 61–valine 76. Acidic residues-rich tracts occupy residues aspartate 77–glutamate 93 and tyrosine 103–alanine 115.

This is an uncharacterized protein from Bacillus subtilis (strain 168).